The sequence spans 449 residues: Chromogranin-A (449 aa).

The first 18 residues, 1–18 (MRSAAVLALLLCAGQVIA), serve as a signal peptide directing secretion. Cys35 and Cys56 are disulfide-bonded. Residues 87 to 431 (AKERTHQQKK…EDQELESLSA (345 aa)) are disordered. The residue at position 99 (Ser99) is a Phosphoserine. Residues 107-140 (VLEKPNDQAEPKEVTEEVSSKDAAEKRDDFKEVE) are compositionally biased toward basic and acidic residues. Ser142 carries the phosphoserine modification. Ser185 carries O-linked (GalNAc...) serine glycosylation. A Phosphotyrosine modification is found at Tyr191. Ser200 bears the Phosphoserine mark. Residue Ser204 is glycosylated (O-linked (GalNAc...) serine). Ser215 is modified (phosphoserine). The span at 233–242 (EAEAREKAVP) shows a compositional bias: basic and acidic residues. Thr249 is a glycosylation site (O-linked (GalNAc...) threonine). Basic and acidic residues predominate over residues 279–297 (GAEEAKPPEGKGEWAHSRQ). The residue at position 295 (Ser295) is a Phosphoserine. Gly312 is modified (glycine amide). Ser315, Ser325, and Ser363 each carry phosphoserine. The segment covering 323–351 (QLSKEWEDAKRWSKMDQLAKELTAEKRLE) has biased composition (basic and acidic residues). Met364 is subject to Methionine sulfoxide. Residues Ser390, Ser394, Ser416, and Ser430 each carry the phosphoserine modification. Over residues 406-423 (YPEEKKEEEGSANRRPED) the composition is skewed to basic and acidic residues. Residue Ser416 is glycosylated (O-linked (Xyl...) (chondroitin sulfate) serine).

The protein belongs to the chromogranin/secretogranin protein family. As to quaternary structure, self-interacts; self-assembly is promoted in vitro by chondroitin sulfate attachment which occurs at mildly acidic pH conditions. Interacts with SCG3. Interacts with ITPR1 in the secretory granules. Post-translationally, in secretory granules, is attacked at both N- and C-terminal sides by proteolytic enzymes generating numerous peptides of various activities. Proteolytic processing can give rise to additional longer forms of catestatin peptides which display a less potent catecholamine release-inhibitory activity. In terms of processing, O-glycosylated; contains chondroitin sulfate (CS). CS attachment is pH-dependent, being observed at mildly acidic conditions of pH 5 but not at neutral pH, and promotes self-assembly in vitro. Highest concentration of GE-25 found in adrenal medulla with lower levels present in the pituitary, the intestinal mucosa and the pancreas. Also found in the brain.

Its subcellular location is the secreted. The protein localises to the cytoplasmic vesicle. It localises to the secretory vesicle. The protein resides in the neuronal dense core vesicle. Its function is as follows. Strongly inhibits glucose induced insulin release from the pancreas. In terms of biological role, completely inhibits catecholamine release from chromaffin cells. Has antibacterial activity against M.luteus. Not active against E.coli. Functionally, inhibits catecholamine release from chromaffin cells and noradrenergic neurons by acting as a non-competitive nicotinic cholinergic antagonist. Displays antibacterial activity against Gram-positive bacteria M.luteus and B.megaterium, and Gram-negative bacteria E.coli, and antifungal activity against a variety of filamentous fungi including A.fumigatus, N.hematococca, F.culmorum, F.oxyporum, T.mentagrophytes and several forms of Candida: C.albicans, C.tropicalis, C.glabrata and C.neoform. Can induce mast cell migration, degranulation and production of cytokines and chemokines. Its function is as follows. Has antibacterial activity against Gram-positive bacteria M.luteus, B.megaterium. Not active against Gram-positive bacteria B.cereus, B.subtilis, S.pyogenes, M.fortuitum, S.aureus and L.monocytogenes and against Gram-negative bacteria E.coli, E.cloacae, S.typhimurium, K.pneumoniae and P.aeruginosa. Possesses antifungal activity against N.crassa, A.fumigatus, A.brassicicola, N.hematococca, F.culmorum and F.oxyporum and against the yeast S.cerevisiae and C.albicans. Inactive against A.benhamiae. In terms of biological role, has antifungal activity against N.crassa, A.fumigatus, A.brassicicola, N.hematococca, F.culmorum, F.oxyporum, A.benhamiae, C.neoformans, as well as against yeasts C.albicans, and C.tropicalis. Seems to be inactive against C.glabrata. Interacts with the fungal cell wall, crosses the plasma membrane and accumulates in fungal cells where it inhibits calcineurin activity. Regulates granule biogenesis in endocrine cells by up-regulating the transcription of protease nexin 1 (SERPINE2) via a cAMP-PKA-SP1 pathway. This leads to inhibition of granule protein degradation in the Golgi complex which in turn promotes granule formation. This is Chromogranin-A (CHGA) from Bos taurus (Bovine).